Consider the following 81-residue polypeptide: Photosystem I iron-sulfur center (81 aa).

4Fe-4S ferredoxin-type domains lie at 2 to 31 (SHTV…MVPW) and 37 to 68 (GQIA…VRVY). Residues Cys-11, Cys-14, Cys-17, Cys-21, Cys-48, Cys-51, Cys-54, and Cys-58 each coordinate [4Fe-4S] cluster.

As to quaternary structure, the eukaryotic PSI reaction center is composed of at least 11 subunits. The cofactor is [4Fe-4S] cluster.

The protein resides in the plastid. The protein localises to the chloroplast thylakoid membrane. It catalyses the reaction reduced [plastocyanin] + hnu + oxidized [2Fe-2S]-[ferredoxin] = oxidized [plastocyanin] + reduced [2Fe-2S]-[ferredoxin]. Its function is as follows. Apoprotein for the two 4Fe-4S centers FA and FB of photosystem I (PSI); essential for photochemical activity. FB is the terminal electron acceptor of PSI, donating electrons to ferredoxin. The C-terminus interacts with PsaA/B/D and helps assemble the protein into the PSI complex. Required for binding of PsaD and PsaE to PSI. PSI is a plastocyanin/cytochrome c6-ferredoxin oxidoreductase, converting photonic excitation into a charge separation, which transfers an electron from the donor P700 chlorophyll pair to the spectroscopically characterized acceptors A0, A1, FX, FA and FB in turn. The chain is Photosystem I iron-sulfur center from Phaeodactylum tricornutum (strain CCAP 1055/1).